The following is a 488-amino-acid chain: MIPVVALVGRPNVGKSTLFNRLTRTRDALVADFPGLTRDRKYGRAFLSGYEFIVVDTGGIDGTEEGIETKMAEQSLAAIEEADVVLFMTDARAGLTAADLSIAQHLRSRQKTTFVVANKIDGIDADSACAEFWSLGLGEVYQMAAAQGRGVTNMIEYALTPYAEAMGIERQGEEEEVDERQYTEEEAEAEQKRLQDLPIKLAIIGKPNVGKSTLTNRILGEERVVVYDEPGTTRDSIYIPMERDGREYVIIDTAGVRRRSKVHEVIEKFSVIKTLKAVEDANVVLLIIDAREGIAEQDLGLLGFALNAGRALVIAVNKWDGIDQGIKDRVKSELDRRLGFIDFARIHFISALHGTGVGHLFESIEEAYDSATRRVSTSMLTRIMQMSQDDHQPPLVNGRRVKLKYAHAGGYNPPIVVIHGNQVSKLPDSYKRYMMNYFRRSLKVVGTPIQLRFQEGDNPFENKVEKLTMSQERRRKRALSHIKDRKTK.

EngA-type G domains are found at residues 3-166 and 199-372; these read PVVA…AEAM and IKLA…DSAT. Residues 9-16, 56-60, 118-121, 205-212, 252-256, and 317-320 contribute to the GTP site; these read GRPNVGKS, DTGGI, NKID, GKPNVGKS, DTAGV, and NKWD. The KH-like domain occupies 373-457; that stretch reads RRVSTSMLTR…PIQLRFQEGD (85 aa).

It belongs to the TRAFAC class TrmE-Era-EngA-EngB-Septin-like GTPase superfamily. EngA (Der) GTPase family. Associates with the 50S ribosomal subunit.

Its function is as follows. GTPase that plays an essential role in the late steps of ribosome biogenesis. The polypeptide is GTPase Der (Shewanella sp. (strain ANA-3)).